Consider the following 162-residue polypeptide: UPF0114 protein PA4574 (162 aa).

3 helical membrane-spanning segments follow: residues tyrosine 10 to isoleucine 32, leucine 53 to isoleucine 75, and leucine 136 to leucine 156.

The protein belongs to the UPF0114 family.

It is found in the cell membrane. The polypeptide is UPF0114 protein PA4574 (Pseudomonas aeruginosa (strain ATCC 15692 / DSM 22644 / CIP 104116 / JCM 14847 / LMG 12228 / 1C / PRS 101 / PAO1)).